Here is a 600-residue protein sequence, read N- to C-terminus: Proline--tRNA ligase (600 aa).

The protein belongs to the class-II aminoacyl-tRNA synthetase family. ProS type 1 subfamily. In terms of assembly, homodimer.

It is found in the cytoplasm. The catalysed reaction is tRNA(Pro) + L-proline + ATP = L-prolyl-tRNA(Pro) + AMP + diphosphate. Functionally, catalyzes the attachment of proline to tRNA(Pro) in a two-step reaction: proline is first activated by ATP to form Pro-AMP and then transferred to the acceptor end of tRNA(Pro). As ProRS can inadvertently accommodate and process non-cognate amino acids such as alanine and cysteine, to avoid such errors it has two additional distinct editing activities against alanine. One activity is designated as 'pretransfer' editing and involves the tRNA(Pro)-independent hydrolysis of activated Ala-AMP. The other activity is designated 'posttransfer' editing and involves deacylation of mischarged Ala-tRNA(Pro). The misacylated Cys-tRNA(Pro) is not edited by ProRS. This Prochlorococcus marinus (strain MIT 9515) protein is Proline--tRNA ligase.